The primary structure comprises 858 residues: Bifunctional uridylyltransferase/uridylyl-removing enzyme (858 aa).

The segment at 1 to 324 is uridylyltransferase; the sequence is MSASVAEPPP…PATSGVTRVL (324 aa). The tract at residues 325 to 681 is uridylyl-removing; the sequence is SPGRFVEKQG…ARPSPVGDAL (357 aa). Positions 443 to 565 constitute an HD domain; the sequence is VDQHILMVLR…VGSERRLTAL (123 aa). 2 consecutive ACT domains span residues 682–761 and 790–858; these read QVLV…PEPS and ILSV…AIAV.

Belongs to the GlnD family. Requires Mg(2+) as cofactor.

It carries out the reaction [protein-PII]-L-tyrosine + UTP = [protein-PII]-uridylyl-L-tyrosine + diphosphate. The enzyme catalyses [protein-PII]-uridylyl-L-tyrosine + H2O = [protein-PII]-L-tyrosine + UMP + H(+). With respect to regulation, uridylyltransferase (UTase) activity is inhibited by glutamine, while glutamine activates uridylyl-removing (UR) activity. Its function is as follows. Modifies, by uridylylation and deuridylylation, the PII regulatory proteins (GlnB and homologs), in response to the nitrogen status of the cell that GlnD senses through the glutamine level. Under low glutamine levels, catalyzes the conversion of the PII proteins and UTP to PII-UMP and PPi, while under higher glutamine levels, GlnD hydrolyzes PII-UMP to PII and UMP (deuridylylation). Thus, controls uridylylation state and activity of the PII proteins, and plays an important role in the regulation of nitrogen assimilation and metabolism. The polypeptide is Bifunctional uridylyltransferase/uridylyl-removing enzyme (Burkholderia pseudomallei (strain K96243)).